A 228-amino-acid polypeptide reads, in one-letter code: Protein Thf1 (228 aa).

Positions 201–223 form a coiled coil; that stretch reads IKRSKEVVDELSQTERRKREERA. Positions 209–228 are disordered; sequence DELSQTERRKREERAVSQPG.

Belongs to the THF1 family.

May be involved in photosynthetic membrane biogenesis. In Gloeobacter violaceus (strain ATCC 29082 / PCC 7421), this protein is Protein Thf1.